The following is a 394-amino-acid chain: N-acetylgalactosamine-6-phosphate deacetylase (394 aa).

Zn(2+) is bound at residue Glu137. Substrate is bound at residue 148-149; it reads CH. 2 residues coordinate Zn(2+): His201 and His222. Residues 225-226, Arg233, and 254-257 contribute to the substrate site; these read NG and DGQH. The active-site Proton donor/acceptor is the Asp280. 313–315 contributes to the substrate binding site; that stretch reads LAG.

It belongs to the metallo-dependent hydrolases superfamily. NagA family.

The protein resides in the cytoplasm. It catalyses the reaction N-acetyl-D-galactosamine 6-phosphate + H2O = D-galactosamine 6-phosphate + acetate. The enzyme catalyses N-acetyl-D-glucosamine 6-phosphate + H2O = D-glucosamine 6-phosphate + acetate. Functionally, involved in the pathway of N-acetyl-D-galactosamine degradation. Catalyzes the conversion of N-acetyl-D-galactosamine 6-phosphate to D-galactosamine 6-phosphate and acetate. It can also catalyze the conversion of N-acetyl-D-glucosamine 6-phosphate. This Shewanella sp. (strain ANA-3) protein is N-acetylgalactosamine-6-phosphate deacetylase.